The following is a 299-amino-acid chain: Bifunctional protein FolD 2 (299 aa).

This sequence belongs to the tetrahydrofolate dehydrogenase/cyclohydrolase family. Homodimer.

The enzyme catalyses (6R)-5,10-methylene-5,6,7,8-tetrahydrofolate + NADP(+) = (6R)-5,10-methenyltetrahydrofolate + NADPH. It catalyses the reaction (6R)-5,10-methenyltetrahydrofolate + H2O = (6R)-10-formyltetrahydrofolate + H(+). It participates in one-carbon metabolism; tetrahydrofolate interconversion. Its function is as follows. Catalyzes the oxidation of 5,10-methylenetetrahydrofolate to 5,10-methenyltetrahydrofolate and then the hydrolysis of 5,10-methenyltetrahydrofolate to 10-formyltetrahydrofolate. The sequence is that of Bifunctional protein FolD 2 (FOLD2) from Arabidopsis thaliana (Mouse-ear cress).